We begin with the raw amino-acid sequence, 160 residues long: MHSAKNRFVQAVQRLQDFRNMYDYEARLATFADWPFTENCKCTPENMAKAGFVHCPTENEPDVACCFFCLKELEGWEPDDDPWTEHSKRSASCGFLSLTKCVNDLTMEGFLRLEADRIKSFYRKFSTVVLQYVEEEMTATTKRLLEYFSNQHQCSIDLDR.

One copy of the BIR repeat lies at 27 to 97; it reads RLATFADWPF…KRSASCGFLS (71 aa). Thr-43 is modified (phosphothreonine; by CDK1). Cys-66, Cys-69, His-86, and Cys-93 together coordinate Zn(2+).

It belongs to the IAP family. In terms of assembly, component of the CPC at least composed of survivin/birc5, incenp, cdca8/borealin and/or cdca9/dasra-A, and aurkb/aurora-B. Interacts directly with incenp (via N-terminus), and may weakly interact with aurkb (via N-terminus) to stabilize the complex. Interacts with GTP-bound ran in both the S and M phases of the cell cycle. Also found in a complex with ubiquitin-mediated signaling proteins including at least usp9x/xFAM, nploc4/npl4 and ufd1. In terms of processing, ubiquitination is required for centrosome-targeting.

It localises to the cytoplasm. The protein resides in the nucleus. The protein localises to the chromosome. Its subcellular location is the centromere. It is found in the cytoskeleton. It localises to the spindle. Its function is as follows. Component of the chromosomal passenger complex (CPC), a complex that acts as a key regulator of mitosis. The CPC complex has essential functions at the centromere in ensuring correct chromosome alignment and segregation and is required for chromatin-induced microtubule stabilization and spindle assembly. Stimulates the mitotic kinase activity of aurkb/aurora-B in the CPC. Does not appear to exhibit anti-apoptotic activity. This Xenopus tropicalis (Western clawed frog) protein is Baculoviral IAP repeat-containing protein 5.1 (birc5.1).